A 314-amino-acid chain; its full sequence is Elongator complex protein 5 (314 aa).

The protein belongs to the ELP5 family. In terms of assembly, component of the elongator complex.

It is found in the cytoplasm. It localises to the nucleus. It functions in the pathway tRNA modification; 5-methoxycarbonylmethyl-2-thiouridine-tRNA biosynthesis. In terms of biological role, component of the elongator complex, a multiprotein complex which is required for multiple tRNA modifications, including mcm5U (5-methoxycarbonylmethyl uridine), mcm5s2U (5-methoxycarbonylmethyl-2-thiouridine), and ncm5U (5-carbamoylmethyl uridine). The elongator complex catalyzes formation of carboxymethyluridine in the wobble base at position 34 in tRNAs. The polypeptide is Elongator complex protein 5 (iki1) (Schizosaccharomyces pombe (strain 972 / ATCC 24843) (Fission yeast)).